The sequence spans 279 residues: Diaminopimelate epimerase (279 aa).

Residues Asn12, Gln45, and Asn65 each contribute to the substrate site. Cys74 acts as the Proton donor in catalysis. Substrate contacts are provided by residues 75-76 (GN), Asn162, Asn195, and 213-214 (ER). Cys222 (proton acceptor) is an active-site residue. A substrate-binding site is contributed by 223 to 224 (GS).

The protein belongs to the diaminopimelate epimerase family. In terms of assembly, homodimer.

The protein resides in the cytoplasm. The enzyme catalyses (2S,6S)-2,6-diaminopimelate = meso-2,6-diaminopimelate. Its pathway is amino-acid biosynthesis; L-lysine biosynthesis via DAP pathway; DL-2,6-diaminopimelate from LL-2,6-diaminopimelate: step 1/1. Functionally, catalyzes the stereoinversion of LL-2,6-diaminopimelate (L,L-DAP) to meso-diaminopimelate (meso-DAP), a precursor of L-lysine and an essential component of the bacterial peptidoglycan. The protein is Diaminopimelate epimerase of Shewanella loihica (strain ATCC BAA-1088 / PV-4).